The primary structure comprises 303 residues: UDP-N-acetylenolpyruvoylglucosamine reductase (303 aa).

One can recognise an FAD-binding PCMH-type domain in the interval 27-217 (KVGGISQVFY…QTVRKLTQPI (191 aa)). The active site involves arginine 175. Serine 224 (proton donor) is an active-site residue. Glutamate 294 is an active-site residue.

It belongs to the MurB family. FAD is required as a cofactor.

The protein localises to the cytoplasm. The enzyme catalyses UDP-N-acetyl-alpha-D-muramate + NADP(+) = UDP-N-acetyl-3-O-(1-carboxyvinyl)-alpha-D-glucosamine + NADPH + H(+). The protein operates within cell wall biogenesis; peptidoglycan biosynthesis. Functionally, cell wall formation. In Orientia tsutsugamushi (strain Ikeda) (Rickettsia tsutsugamushi), this protein is UDP-N-acetylenolpyruvoylglucosamine reductase.